Consider the following 151-residue polypeptide: Cytochrome c oxidase-assembly factor COX23, mitochondrial (151 aa).

Residues 1–10 constitute a mitochondrion transit peptide; sequence MEKPSPTRRQ. Positions 1–86 are disordered; it reads MEKPSPTRRQ…QYYPDDPENP (86 aa). A compositionally biased stretch (polar residues) spans 7–18; that stretch reads TRRQTSSLSTIS. Low complexity predominate over residues 19 to 51; the sequence is NGMTMTNDNRDTTNTNSGSTSSNNSQPSSSSTP. The CHCH domain occupies 101–143; sequence YDPCEESSKLSFQCLERNDYDRSKCQEYFDAYRECKKQWLTAR. Short sequence motifs (cx9C motif) lie at residues 104-114 and 125-135; these read CEESSKLSFQC and CQEYFDAYREC. 2 disulfides stabilise this stretch: Cys-104/Cys-135 and Cys-114/Cys-125.

Belongs to the COX23 family.

It localises to the cytoplasm. It is found in the mitochondrion intermembrane space. Its function is as follows. Required for the assembly of cytochrome c oxidase. The polypeptide is Cytochrome c oxidase-assembly factor COX23, mitochondrial (COX23) (Saccharomyces cerevisiae (strain ATCC 204508 / S288c) (Baker's yeast)).